A 711-amino-acid polypeptide reads, in one-letter code: GDNF-inducible zinc finger protein 1 (711 aa).

One can recognise a BTB domain in the interval 31–103 (CDVTVSVEYQ…VYTAKVQVEE (73 aa)). Positions 153-168 (SGSQVSAAPAPRASVA) are enriched in low complexity. 2 disordered regions span residues 153–220 (SGSQ…PKIR) and 243–312 (RLRE…EGEK). Basic and acidic residues-rich tracts occupy residues 197-212 (PPKK…KEVV), 243-252 (RLREQQKTAE), and 265-277 (SPDR…EQVS). The segment covering 298–309 (EEEEEEEEEDEE) has biased composition (acidic residues). 10 consecutive C2H2-type zinc fingers follow at residues 317 to 340 (FKCS…KHRH), 348 to 371 (YRCD…RHVH), 377 to 400 (FPCE…LQVH), 407 to 429 (HRCG…ERTH), 435 to 457 (YGCT…MRIH), 463 to 485 (FVCD…KRCH), 491 to 513 (FMCE…NRIH), 519 to 541 (FKCE…IKVH), 547 to 569 (YCCD…RRIH), and 575 to 597 (FMCN…TSIH). A Phosphoserine modification is found at serine 613.

It belongs to the krueppel C2H2-type zinc-finger protein family. In terms of assembly, interacts with NCL. In terms of tissue distribution, expressed in adult brain, heart, skeletal muscle, kidney and liver. Also detected in fetal brain and kidney, and at lower levels in fetal lung and liver.

It is found in the cytoplasm. The protein localises to the nucleus. Its subcellular location is the nucleoplasm. It localises to the nucleolus. Its function is as follows. Transcriptional repressor that binds the GZF1 responsive element (GRE) (consensus: 5'-TGCGCN[TG][CA]TATA-3'). May be regulating VSX2/HOX10 expression. In Homo sapiens (Human), this protein is GDNF-inducible zinc finger protein 1.